The following is a 504-amino-acid chain: MADFVASIDQGTTSTRAMIFNHRGEEVGRHQLEHQQLLPRAGWVEHNPVEIWERTWSVLATSLNVTGLSAGDLAAVGVTNQRETTLVWNRHTGRPYCNAIVWQDTRTDKIAAALDRDGRGDIIRRKAGLPPATYFSGGKLQWILENVEGVRRDAENGDALFGTPDSWVIWNLTGGVRSGVHVTDVTNASRTMLMNLETLDWDDELLSFFSIPRQMLPPIKASSPVEPFGFTTQLGPLGGEVPIAGDLGDQQAAMVGQVCLNPGEAKNTYGTGNFLLLNTGEELVHSSNGLLTTVCYQFGDNKPVYALEGSIAVTGSAVQWLRDQLGIISGASQSEDLARQVEDNGGVYFVPAFSGLFAPYWRSDARGAIVGLSRFNTNAHLARATLEAICYQSREVVEAMEADSGVRMEVLKVDGGITANKLCMQIQADTLGVDVVKPVVAETTALGAAYAAGLAVGFWKDADDLRRNWQEDERWSSSITDEKRAEGFAGWKKAVQRTLDGVDV.

An ADP-binding site is contributed by threonine 12. ATP contacts are provided by threonine 12, threonine 13, and serine 14. Residue threonine 12 participates in sn-glycerol 3-phosphate binding. An ADP-binding site is contributed by arginine 16. The sn-glycerol 3-phosphate site is built by arginine 82, glutamate 83, tyrosine 134, and aspartate 249. Residues arginine 82, glutamate 83, tyrosine 134, aspartate 249, and glutamine 250 each coordinate glycerol. Threonine 271 and glycine 315 together coordinate ADP. Positions 271, 315, 319, and 416 each coordinate ATP. ADP is bound by residues glycine 416 and asparagine 420.

This sequence belongs to the FGGY kinase family.

The enzyme catalyses glycerol + ATP = sn-glycerol 3-phosphate + ADP + H(+). Its pathway is polyol metabolism; glycerol degradation via glycerol kinase pathway; sn-glycerol 3-phosphate from glycerol: step 1/1. With respect to regulation, inhibited by fructose 1,6-bisphosphate (FBP). In terms of biological role, key enzyme in the regulation of glycerol uptake and metabolism. Catalyzes the phosphorylation of glycerol to yield sn-glycerol 3-phosphate. The chain is Glycerol kinase from Mycobacteroides abscessus (strain ATCC 19977 / DSM 44196 / CCUG 20993 / CIP 104536 / JCM 13569 / NCTC 13031 / TMC 1543 / L948) (Mycobacterium abscessus).